The chain runs to 443 residues: Maintenance of mitochondrial morphology protein 1 (443 aa).

Topologically, residues 1–80 are lumenal; sequence MADLETSDLS…PSNTWSFTQG (80 aa). Residues 81-101 form a helical membrane-spanning segment; that stretch reads LIVGQLSVVFVIVIFIKFFVF. Over 102–443 the chain is Cytoplasmic; that stretch reads AESSPALAKS…NGDKVEDGSN (342 aa). Disordered stretches follow at residues 126–146 and 304–358; these read KKDQ…TTAS and LSAH…NDGT. The span at 131 to 142 shows a compositional bias: acidic residues; sequence SSDDADPDDDSE. Residues 165-417 enclose the SMP-LTD domain; it reads SPESLDWFNV…EPRFQVVRLP (253 aa).

This sequence belongs to the MMM1 family. In terms of assembly, homodimer. Component of the ER-mitochondria encounter structure (ERMES) or MDM complex, composed of MMM1, MDM10, MDM12 and MDM34. An MMM1 homodimer associates with one molecule of MDM12 on each side in a pairwise head-to-tail manner, and the SMP-LTD domains of MMM1 and MDM12 generate a continuous hydrophobic tunnel for phospholipid trafficking.

It localises to the endoplasmic reticulum membrane. In terms of biological role, component of the ERMES/MDM complex, which serves as a molecular tether to connect the endoplasmic reticulum (ER) and mitochondria. Components of this complex are involved in the control of mitochondrial shape and protein biogenesis, and function in nonvesicular lipid trafficking between the ER and mitochondria. The MDM12-MMM1 subcomplex functions in the major beta-barrel assembly pathway that is responsible for biogenesis of all outer membrane beta-barrel proteins, and acts in a late step after the SAM complex. The MDM10-MDM12-MMM1 subcomplex further acts in the TOM40-specific pathway after the action of the MDM12-MMM1 complex. Essential for establishing and maintaining the structure of mitochondria and maintenance of mtDNA nucleoids. This chain is Maintenance of mitochondrial morphology protein 1, found in Scheffersomyces stipitis (strain ATCC 58785 / CBS 6054 / NBRC 10063 / NRRL Y-11545) (Yeast).